A 422-amino-acid polypeptide reads, in one-letter code: Adenylosuccinate synthetase (422 aa).

GTP is bound by residues 11-17 (GDEGKGK) and 39-41 (GHT). The Proton acceptor role is filled by D12. Residues D12 and G39 each coordinate Mg(2+). IMP is bound by residues 12–15 (DEGK), 37–40 (NAGH), T129, R143, N219, T234, and R298. Residue H40 is the Proton donor of the active site. 294–300 (VTTGRRR) contacts substrate. Residues R300, 326–328 (KLD), and 409–411 (GTG) each bind GTP.

This sequence belongs to the adenylosuccinate synthetase family. As to quaternary structure, homodimer. Mg(2+) serves as cofactor.

Its subcellular location is the cytoplasm. The enzyme catalyses IMP + L-aspartate + GTP = N(6)-(1,2-dicarboxyethyl)-AMP + GDP + phosphate + 2 H(+). It participates in purine metabolism; AMP biosynthesis via de novo pathway; AMP from IMP: step 1/2. Plays an important role in the de novo pathway and in the salvage pathway of purine nucleotide biosynthesis. Catalyzes the first committed step in the biosynthesis of AMP from IMP. The chain is Adenylosuccinate synthetase from Blastomyces gilchristii (strain SLH14081) (Blastomyces dermatitidis).